The primary structure comprises 317 residues: Tenomodulin (317 aa).

The Cytoplasmic segment spans residues methionine 1–lysine 30. A helical; Signal-anchor for type II membrane protein membrane pass occupies residues isoleucine 31–serine 50. Over lysine 51–valine 317 the chain is Extracellular. The region spanning glycine 93–isoleucine 186 is the BRICHOS domain. Asparagine 94 carries an N-linked (GlcNAc...) asparagine glycan. Cysteines 120 and 178 form a disulfide. A glycan (N-linked (GlcNAc...) asparagine) is linked at asparagine 180. Phosphoserine is present on serine 239.

It belongs to the chondromodulin-1 family. In terms of tissue distribution, highly expressed in tendons.

It is found in the membrane. Its subcellular location is the nucleus envelope. May be an angiogenesis inhibitor. In Rattus norvegicus (Rat), this protein is Tenomodulin (Tnmd).